A 293-amino-acid chain; its full sequence is Elongation factor Ts (293 aa).

The interval 80–83 is involved in Mg(2+) ion dislocation from EF-Tu; sequence TDFV.

Belongs to the EF-Ts family.

Its subcellular location is the cytoplasm. Its function is as follows. Associates with the EF-Tu.GDP complex and induces the exchange of GDP to GTP. It remains bound to the aminoacyl-tRNA.EF-Tu.GTP complex up to the GTP hydrolysis stage on the ribosome. The sequence is that of Elongation factor Ts from Burkholderia cenocepacia (strain ATCC BAA-245 / DSM 16553 / LMG 16656 / NCTC 13227 / J2315 / CF5610) (Burkholderia cepacia (strain J2315)).